The sequence spans 256 residues: Cytochrome c-type biogenesis protein CcmE homolog, mitochondrial (256 aa).

Residues 1–57 (MAARLLFRRSSQILRSIQRNPQISSSFESPPCPIFHSLTTASPDPSRLSSLTFLRSL) constitute a mitochondrion transit peptide. The helical transmembrane segment at 84-106 (LWTYALTFSCIAGFVVIVLNQFQ) threads the bilayer. His-222 and Tyr-226 together coordinate heme.

The protein belongs to the CcmE/CycJ family.

It localises to the mitochondrion inner membrane. Its subcellular location is the mitochondrion intermembrane space. Functionally, heme-binding chaperone that may be involved in cytochrome c maturation in mitochondria. The polypeptide is Cytochrome c-type biogenesis protein CcmE homolog, mitochondrial (Arabidopsis thaliana (Mouse-ear cress)).